The following is a 102-amino-acid chain: Apolipoprotein A-II (102 aa).

The signal sequence occupies residues 1-18 (MKLLAMVALLVTICSLEG). Met49 carries the post-translational modification Methionine sulfoxide.

This sequence belongs to the apolipoprotein A2 family. In terms of assembly, monomer. Interacts with NAXE and NDRG1. Plasma.

Its subcellular location is the secreted. In terms of biological role, may stabilize HDL (high density lipoprotein) structure by its association with lipids, and affect the HDL metabolism. This chain is Apolipoprotein A-II (Apoa2), found in Rattus norvegicus (Rat).